The following is a 228-amino-acid chain: 2,3-bisphosphoglycerate-dependent phosphoglycerate mutase (228 aa).

Substrate contacts are provided by residues 8–15, 21–22, Arg60, 87–90, Lys98, 114–115, and 180–181; these read RHGQSQWN, TG, ERHY, RR, and GN. Residue His9 is the Tele-phosphohistidine intermediate of the active site. Glu87 (proton donor/acceptor) is an active-site residue.

Belongs to the phosphoglycerate mutase family. BPG-dependent PGAM subfamily. Homodimer.

It carries out the reaction (2R)-2-phosphoglycerate = (2R)-3-phosphoglycerate. It participates in carbohydrate degradation; glycolysis; pyruvate from D-glyceraldehyde 3-phosphate: step 3/5. In terms of biological role, catalyzes the interconversion of 2-phosphoglycerate and 3-phosphoglycerate. In Sphingopyxis alaskensis (strain DSM 13593 / LMG 18877 / RB2256) (Sphingomonas alaskensis), this protein is 2,3-bisphosphoglycerate-dependent phosphoglycerate mutase.